A 128-amino-acid polypeptide reads, in one-letter code: Histone H2A type 1-J (128 aa).

The interval 1-22 is disordered; that stretch reads MSGRGKQGGKARAKAKTRSSRA. Ser-2 bears the N-acetylserine mark. Ser-2 is modified (phosphoserine; by RPS6KA5). Arg-4 is subject to Citrulline; alternate. Arg-4 bears the Symmetric dimethylarginine; by PRMT5; alternate mark. Lys-6 bears the N6-(2-hydroxyisobutyryl)lysine mark. Positions 7 to 19 are enriched in basic residues; sequence QGGKARAKAKTRS. Lys-10 carries the N6-(2-hydroxyisobutyryl)lysine; alternate modification. N6-(beta-hydroxybutyryl)lysine; alternate occurs at positions 10 and 14. Lys-10 carries the N6-lactoyllysine; alternate modification. Lys-10 carries the post-translational modification N6-succinyllysine; alternate. Residue Lys-14 forms a Glycyl lysine isopeptide (Lys-Gly) (interchain with G-Cter in ubiquitin); alternate linkage. Residue Lys-16 forms a Glycyl lysine isopeptide (Lys-Gly) (interchain with G-Cter in ubiquitin) linkage. Residue Lys-37 is modified to N6-(2-hydroxyisobutyryl)lysine; alternate. Residue Lys-37 is modified to N6-(beta-hydroxybutyryl)lysine; alternate. N6-crotonyllysine; alternate is present on Lys-37. N6-(2-hydroxyisobutyryl)lysine is present on residues Lys-75 and Lys-76. Position 96 is an N6-(2-hydroxyisobutyryl)lysine; alternate (Lys-96). An N6-(beta-hydroxybutyryl)lysine; alternate modification is found at Lys-96. N6-succinyllysine; alternate is present on Lys-96. The residue at position 96 (Lys-96) is an N6-glutaryllysine; alternate. An N6-glutaryllysine modification is found at Lys-100. Gln-105 is subject to N5-methylglutamine. N6-(2-hydroxyisobutyryl)lysine; alternate is present on Lys-119. Residue Lys-119 is modified to N6-(beta-hydroxybutyryl)lysine; alternate. 2 positions are modified to N6-crotonyllysine; alternate: Lys-119 and Lys-120. Lys-119 and Lys-120 each carry N6-glutaryllysine; alternate. A Glycyl lysine isopeptide (Lys-Gly) (interchain with G-Cter in ubiquitin); alternate cross-link involves residue Lys-120. Position 121 is a phosphothreonine; by DCAF1 (Thr-121). Lys-126 is subject to N6-crotonyllysine; alternate. Lys-126 is modified (N6-glutaryllysine; alternate).

This sequence belongs to the histone H2A family. In terms of assembly, the nucleosome is a histone octamer containing two molecules each of H2A, H2B, H3 and H4 assembled in one H3-H4 heterotetramer and two H2A-H2B heterodimers. The octamer wraps approximately 147 bp of DNA. Deiminated on Arg-4 in granulocytes upon calcium entry. In terms of processing, monoubiquitination of Lys-120 (H2AK119Ub) by RING1, TRIM37 and RNF2/RING2 complex gives a specific tag for epigenetic transcriptional repression and participates in X chromosome inactivation of female mammals. It is involved in the initiation of both imprinted and random X inactivation. Ubiquitinated H2A is enriched in inactive X chromosome chromatin. Ubiquitination of H2A functions downstream of methylation of 'Lys-27' of histone H3 (H3K27me). H2AK119Ub by RNF2/RING2 can also be induced by ultraviolet and may be involved in DNA repair. Monoubiquitination of Lys-120 (H2AK119Ub) by TRIM37 may promote transformation of cells in a number of breast cancers. Following DNA double-strand breaks (DSBs), it is ubiquitinated through 'Lys-63' linkage of ubiquitin moieties by the E2 ligase UBE2N and the E3 ligases RNF8 and RNF168, leading to the recruitment of repair proteins to sites of DNA damage. Ubiquitination at Lys-14 and Lys-16 (H2AK13Ub and H2AK15Ub, respectively) in response to DNA damage is initiated by RNF168 that mediates monoubiquitination at these 2 sites, and 'Lys-63'-linked ubiquitin are then conjugated to monoubiquitin; RNF8 is able to extend 'Lys-63'-linked ubiquitin chains in vitro. Deubiquitinated by USP51 at Lys-14 and Lys-16 (H2AK13Ub and H2AK15Ub, respectively) after damaged DNA is repaired. H2AK119Ub and ionizing radiation-induced 'Lys-63'-linked ubiquitination (H2AK13Ub and H2AK15Ub) are distinct events. Post-translationally, phosphorylation on Ser-2 (H2AS1ph) is enhanced during mitosis. Phosphorylation on Ser-2 by RPS6KA5/MSK1 directly represses transcription. Acetylation of H3 inhibits Ser-2 phosphorylation by RPS6KA5/MSK1. Phosphorylation at Thr-121 (H2AT120ph) by DCAF1 is present in the regulatory region of many tumor suppresor genes and down-regulates their transcription. Glutamine methylation at Gln-105 (H2AQ104me) by FBL is specifically dedicated to polymerase I. It is present at 35S ribosomal DNA locus and impairs binding of the FACT complex. In terms of processing, symmetric dimethylation on Arg-4 by the PRDM1/PRMT5 complex may play a crucial role in the germ-cell lineage. Post-translationally, crotonylation (Kcr) is specifically present in male germ cells and marks testis-specific genes in post-meiotic cells, including X-linked genes that escape sex chromosome inactivation in haploid cells. Crotonylation marks active promoters and enhancers and confers resistance to transcriptional repressors. It is also associated with post-meiotically activated genes on autosomes. Lactylated in macrophages by EP300/P300 by using lactoyl-CoA directly derived from endogenous or exogenous lactate, leading to stimulates gene transcription.

The protein localises to the nucleus. The protein resides in the chromosome. In terms of biological role, core component of nucleosome. Nucleosomes wrap and compact DNA into chromatin, limiting DNA accessibility to the cellular machineries which require DNA as a template. Histones thereby play a central role in transcription regulation, DNA repair, DNA replication and chromosomal stability. DNA accessibility is regulated via a complex set of post-translational modifications of histones, also called histone code, and nucleosome remodeling. This Homo sapiens (Human) protein is Histone H2A type 1-J.